Consider the following 473-residue polypeptide: Putative sulfoquinovose importer (473 aa).

11 helical membrane passes run Ala18–Leu38, Leu45–Phe65, Pro88–Thr108, Phe110–Tyr130, Gly160–Phe180, Gly187–Phe207, Leu239–Ile259, Trp276–Val296, Ile317–Phe337, Ile380–Pro400, and Leu415–Tyr435.

Belongs to the sodium:galactoside symporter (TC 2.A.2) family.

The protein resides in the cell inner membrane. Could be involved in sulfoquinovose import. The protein is Putative sulfoquinovose importer (yihO) of Salmonella typhimurium (strain LT2 / SGSC1412 / ATCC 700720).